Here is a 175-residue protein sequence, read N- to C-terminus: Small ribosomal subunit protein uS5 (175 aa).

Residues 1–21 (MAKPERNKKPQQAEERDDGMR) are disordered. Residues 20-83 (MREKMVAVNR…EEARRKMAKV (64 aa)) enclose the S5 DRBM domain.

This sequence belongs to the universal ribosomal protein uS5 family. Part of the 30S ribosomal subunit. Contacts proteins S4 and S8.

Functionally, with S4 and S12 plays an important role in translational accuracy. Its function is as follows. Located at the back of the 30S subunit body where it stabilizes the conformation of the head with respect to the body. This is Small ribosomal subunit protein uS5 from Dechloromonas aromatica (strain RCB).